The sequence spans 123 residues: Fluoride-specific ion channel FluC (123 aa).

Helical transmembrane passes span 7–27 (VAIA…SGIL), 39–59 (LVNS…FWGI), 68–88 (FFGT…YETF), and 100–120 (ALNI…GFIL). Gly-75 and Ser-78 together coordinate Na(+).

It belongs to the fluoride channel Fluc/FEX (TC 1.A.43) family.

The protein resides in the cell membrane. It catalyses the reaction fluoride(in) = fluoride(out). Its activity is regulated as follows. Na(+) is not transported, but it plays an essential structural role and its presence is essential for fluoride channel function. Fluoride-specific ion channel. Important for reducing fluoride concentration in the cell, thus reducing its toxicity. This is Fluoride-specific ion channel FluC from Thermococcus onnurineus (strain NA1).